The primary structure comprises 206 residues: Guanylate kinase (206 aa).

Residues 5 to 183 form the Guanylate kinase-like domain; the sequence is FNLLILSGPS…SKEIILSIAK (179 aa). 12 to 19 serves as a coordination point for ATP; the sequence is GPSGAGKS.

This sequence belongs to the guanylate kinase family.

It localises to the cytoplasm. It carries out the reaction GMP + ATP = GDP + ADP. Functionally, essential for recycling GMP and indirectly, cGMP. The protein is Guanylate kinase (gmk) of Helicobacter pylori (strain J99 / ATCC 700824) (Campylobacter pylori J99).